Here is a 396-residue protein sequence, read N- to C-terminus: Elongation factor Tu (396 aa).

The tr-type G domain maps to Lys10–Glu206. Residues Gly19–Thr26 are G1. Gly19 to Thr26 provides a ligand contact to GTP. Thr26 lines the Mg(2+) pocket. Residues Gly60–Asn64 form a G2 region. The G3 stretch occupies residues Asp81–Gly84. Residues Asp81 to His85 and Asn136 to Asp139 contribute to the GTP site. Positions Asn136–Asp139 are G4. The tract at residues Ser174–Lys176 is G5.

Belongs to the TRAFAC class translation factor GTPase superfamily. Classic translation factor GTPase family. EF-Tu/EF-1A subfamily. As to quaternary structure, monomer.

The protein localises to the cytoplasm. It catalyses the reaction GTP + H2O = GDP + phosphate + H(+). Its function is as follows. GTP hydrolase that promotes the GTP-dependent binding of aminoacyl-tRNA to the A-site of ribosomes during protein biosynthesis. The protein is Elongation factor Tu of Janthinobacterium sp. (strain Marseille) (Minibacterium massiliensis).